The sequence spans 235 residues: Elongation factor Tu, chloroplastic (235 aa).

In terms of domain architecture, tr-type G spans 1-125; it reads KNMITGAAQM…AVDSYIPTPE (125 aa). Residue 47–50 participates in GTP binding; the sequence is NKED.

Belongs to the TRAFAC class translation factor GTPase superfamily. Classic translation factor GTPase family. EF-Tu/EF-1A subfamily.

It localises to the plastid. It is found in the chloroplast. The enzyme catalyses GTP + H2O = GDP + phosphate + H(+). Its function is as follows. GTP hydrolase that promotes the GTP-dependent binding of aminoacyl-tRNA to the A-site of ribosomes during protein biosynthesis. The chain is Elongation factor Tu, chloroplastic (tufA) from Mantoniella squamata (Unicellular alga).